A 424-amino-acid chain; its full sequence is Histidine--tRNA ligase (424 aa).

It belongs to the class-II aminoacyl-tRNA synthetase family. Homodimer.

It is found in the cytoplasm. The enzyme catalyses tRNA(His) + L-histidine + ATP = L-histidyl-tRNA(His) + AMP + diphosphate + H(+). In Escherichia coli O17:K52:H18 (strain UMN026 / ExPEC), this protein is Histidine--tRNA ligase.